The sequence spans 159 residues: Urease accessory protein UreE (159 aa).

Belongs to the UreE family.

The protein resides in the cytoplasm. In terms of biological role, involved in urease metallocenter assembly. Binds nickel. Probably functions as a nickel donor during metallocenter assembly. This Acinetobacter baylyi (strain ATCC 33305 / BD413 / ADP1) protein is Urease accessory protein UreE.